The sequence spans 223 residues: Uracil-DNA glycosylase (223 aa).

Aspartate 66 serves as the catalytic Proton acceptor.

The protein belongs to the uracil-DNA glycosylase (UDG) superfamily. UNG family.

The protein localises to the cytoplasm. It carries out the reaction Hydrolyzes single-stranded DNA or mismatched double-stranded DNA and polynucleotides, releasing free uracil.. Excises uracil residues from the DNA which can arise as a result of misincorporation of dUMP residues by DNA polymerase or due to deamination of cytosine. The sequence is that of Uracil-DNA glycosylase from Sulfurimonas denitrificans (strain ATCC 33889 / DSM 1251) (Thiomicrospira denitrificans (strain ATCC 33889 / DSM 1251)).